The chain runs to 350 residues: UDP-3-O-acylglucosamine N-acyltransferase (350 aa).

His-244 (proton acceptor) is an active-site residue.

Belongs to the transferase hexapeptide repeat family. LpxD subfamily. Homotrimer.

The enzyme catalyses a UDP-3-O-[(3R)-3-hydroxyacyl]-alpha-D-glucosamine + a (3R)-hydroxyacyl-[ACP] = a UDP-2-N,3-O-bis[(3R)-3-hydroxyacyl]-alpha-D-glucosamine + holo-[ACP] + H(+). The protein operates within bacterial outer membrane biogenesis; LPS lipid A biosynthesis. Its function is as follows. Catalyzes the N-acylation of UDP-3-O-acylglucosamine using 3-hydroxyacyl-ACP as the acyl donor. Is involved in the biosynthesis of lipid A, a phosphorylated glycolipid that anchors the lipopolysaccharide to the outer membrane of the cell. The sequence is that of UDP-3-O-acylglucosamine N-acyltransferase from Janthinobacterium sp. (strain Marseille) (Minibacterium massiliensis).